The primary structure comprises 255 residues: Coiled-coil domain-containing 92B (255 aa).

Residues 28–90 (LRDLHLEILR…AAANAELRRE (63 aa)) adopt a coiled-coil conformation. The interval 149–255 (QRLQAPRPGP…SQPSAPGDPE (107 aa)) is disordered. The span at 166–177 (PRRRALRARRPP) shows a compositional bias: basic residues. Residues 242–255 (QPAPSQPSAPGDPE) are compositionally biased toward pro residues.

This is Coiled-coil domain-containing 92B from Homo sapiens (Human).